Here is a 161-residue protein sequence, read N- to C-terminus: uncharacterized protein (161 aa).

A helical transmembrane segment spans residues 76–94 (ISISSQCIFNVVILSFVFT).

It localises to the membrane. This is an uncharacterized protein from Saccharomyces cerevisiae (strain ATCC 204508 / S288c) (Baker's yeast).